A 119-amino-acid chain; its full sequence is UPF0342 protein GTNG_0551 (119 aa).

The protein belongs to the UPF0342 family.

This Geobacillus thermodenitrificans (strain NG80-2) protein is UPF0342 protein GTNG_0551.